The chain runs to 312 residues: Ribosomal RNA small subunit methyltransferase H (312 aa).

S-adenosyl-L-methionine-binding positions include 34 to 36 (GGH), Asp54, Phe78, Asp100, and Gln107.

It belongs to the methyltransferase superfamily. RsmH family.

The protein resides in the cytoplasm. The catalysed reaction is cytidine(1402) in 16S rRNA + S-adenosyl-L-methionine = N(4)-methylcytidine(1402) in 16S rRNA + S-adenosyl-L-homocysteine + H(+). Specifically methylates the N4 position of cytidine in position 1402 (C1402) of 16S rRNA. This Salmonella choleraesuis (strain SC-B67) protein is Ribosomal RNA small subunit methyltransferase H.